Consider the following 228-residue polypeptide: Prolactin-2B1 (228 aa).

The signal sequence occupies residues 1–31 (MLLSLTQMLSSRASSRLFLVSYLLLWENVVS). 2 cysteine pairs are disulfide-bonded: C89–C194 and C203–C228.

This sequence belongs to the somatotropin/prolactin family. Expressed specifically in placenta. Expressed at high levels in trophoblast cells from both junctional and labyrinth zones of the chorioallantoic placenta the last week of gestation.

The protein resides in the secreted. The polypeptide is Prolactin-2B1 (Prl2b1) (Mus musculus (Mouse)).